Consider the following 342-residue polypeptide: MNENEYDNFDDLDDLLDEDPTKLDEAEPDDVQAKGSVYNDSENKEKNAESKDSDGVQVANESEEDPELKEMMVDLQNEFANLMKNNGNENNVKTEDFNKLISALEEAAKVPHQQMEQGCSSLKSNSTDKGTVNGSNPGFKNIVSNTLDRLKENGNKVDTSLAEETKESQRSGQNNNIDDILSQLLDQMVASGGKESAENQFDLKDGEMDDAITKILDQMTSKEVLYEPMKEMRSEFGVWFQENGENEEHKEKIGTYKRQFNIVDEIVNIYELKDYDELKHKDRVTELLDELEQLGDSPIRSANSPLKHGNEEEELMKMLEIDGNDPNLGNLDKELTDGCKQQ.

Residues 1 to 18 (MNENEYDNFDDLDDLLDE) show a composition bias toward acidic residues. Disordered stretches follow at residues 1-68 (MNEN…DPEL) and 119-141 (CSSL…GFKN). Over residues 41–54 (SENKEKNAESKDSD) the composition is skewed to basic and acidic residues. At Ser62 the chain carries Phosphoserine. A Phosphoserine modification is found at Ser304. The disordered stretch occupies residues 321-342 (IDGNDPNLGNLDKELTDGCKQQ). A compositionally biased stretch (basic and acidic residues) spans 331-342 (LDKELTDGCKQQ). Residue Cys339 is modified to Cysteine methyl ester. Cys339 carries the S-farnesyl cysteine lipid modification. Residues 340–342 (KQQ) constitute a propeptide, removed in mature form.

This sequence belongs to the peroxin-19 family. In terms of assembly, interacts (farnesylated) with PEX3; farnesylation is required for this interaction. Interacts with PEX2, PEX5, PEX10, PEX11, PEX12, PEX13, PEX14, PEX17, PEX22, PEX25, PEX30 and PEX32; the interaction requires well-defined PEX19-binding sites within the peroxisomal membrane protein targeting signal (mPTS) of the PMPs and is independent on the presence of PEX3. Interacts with VPS1.

The protein localises to the cytoplasm. The protein resides in the peroxisome membrane. It is found in the endoplasmic reticulum membrane. Required for proper post-translational import and stabilization of peroxisomal membrane proteins (PMPs). Acts as a cytosolic import receptor for PMPs and delivers them to the docking factor PEX3 at the peroxisomal membrane for subsequent insertion into the membrane. Acts as a chaperone in stabilizing or maintaining PMPs in the lipid bilayer. Directs PEX17, a peripheral component of the peroxisomal matrix protein translocation machinery, to peroxisomes. Stabilizes VPS1, a protein required for peroxisomal fission, at the peroxisomal membrane. Also acts in conjunction with PEX3 in the formation of peroxisomes from preperoxisomal compartments at the endoplasmic reticulum during de novo peroxisome synthesis, probably via the import of additional PMPs. This Saccharomyces cerevisiae (strain ATCC 204508 / S288c) (Baker's yeast) protein is Peroxisomal membrane protein import receptor PEX19 (PEX19).